We begin with the raw amino-acid sequence, 160 residues long: MSEVNKVSVSCEGFCPPPWIGQVAPFVCAVLDSQAISHWDLSIVCCTDAFIRRLNYDYRGIDSPTDVLSFENDGEYCDDAGTRFFLAGDIIISLESVRENSERFHVAAHEEFKRVLIHGILHLSGMDHQDNSPGQEMLRLQERILAQHCRVLSSGIPWES.

Positions 118, 122, and 128 each coordinate Zn(2+).

The protein belongs to the endoribonuclease YbeY family. Zn(2+) is required as a cofactor.

The protein localises to the cytoplasm. Single strand-specific metallo-endoribonuclease involved in late-stage 70S ribosome quality control and in maturation of the 3' terminus of the 16S rRNA. This Treponema pallidum (strain Nichols) protein is Endoribonuclease YbeY.